The primary structure comprises 352 residues: Molybdenum import ATP-binding protein ModC (352 aa).

The region spanning 1–229 is the ABC transporter domain; sequence MLELNFSQTL…SVMNPWLPKE (229 aa). An ATP-binding site is contributed by 31 to 38; that stretch reads GVSGAGKT. A Mop domain is found at 289–352; that stretch reads QTSIRNVLRA…AQIKSVSITA (64 aa).

It belongs to the ABC transporter superfamily. Molybdate importer (TC 3.A.1.8) family. In terms of assembly, the complex is composed of two ATP-binding proteins (ModC), two transmembrane proteins (ModB) and a solute-binding protein (ModA).

The protein localises to the cell inner membrane. The catalysed reaction is molybdate(out) + ATP + H2O = molybdate(in) + ADP + phosphate + H(+). In terms of biological role, part of the ABC transporter complex ModABC involved in molybdenum import. Responsible for energy coupling to the transport system. The protein is Molybdenum import ATP-binding protein ModC of Shigella flexneri.